Reading from the N-terminus, the 269-residue chain is Adenosylcobinamide-GDP ribazoletransferase (269 aa).

6 helical membrane passes run 63–83, 87–107, 137–157, 158–178, 202–222, and 246–266; these read SAYYPLAGYAVGGLVAGLLYL, LPPGVVAALGVGLWLGLTGML, VGAFGLATGVLALLLLWSLLG, AGLPWYAPLVAAVVARMVVLM, LAFLFALPALLLPHAWLAALV, and VYGLLIVVAELLVLGFYGWGF.

This sequence belongs to the CobS family. Mg(2+) is required as a cofactor.

It is found in the cell membrane. It carries out the reaction alpha-ribazole + adenosylcob(III)inamide-GDP = adenosylcob(III)alamin + GMP + H(+). It catalyses the reaction alpha-ribazole 5'-phosphate + adenosylcob(III)inamide-GDP = adenosylcob(III)alamin 5'-phosphate + GMP + H(+). Its pathway is cofactor biosynthesis; adenosylcobalamin biosynthesis; adenosylcobalamin from cob(II)yrinate a,c-diamide: step 7/7. Joins adenosylcobinamide-GDP and alpha-ribazole to generate adenosylcobalamin (Ado-cobalamin). Also synthesizes adenosylcobalamin 5'-phosphate from adenosylcobinamide-GDP and alpha-ribazole 5'-phosphate. This chain is Adenosylcobinamide-GDP ribazoletransferase, found in Deinococcus radiodurans (strain ATCC 13939 / DSM 20539 / JCM 16871 / CCUG 27074 / LMG 4051 / NBRC 15346 / NCIMB 9279 / VKM B-1422 / R1).